Here is a 537-residue protein sequence, read N- to C-terminus: Intercellular adhesion molecule 1 (537 aa).

A signal peptide spans 1-27 (MASTRAKPTLPLLLALVTVVIPGPGDA). Topologically, residues 28–485 (QVSIHPREAF…LTVLYHSQNN (458 aa)) are extracellular. Ig-like C2-type domains are found at residues 41–102 (GGSV…QSSA) and 127–195 (GKDL…LDLR). Asn47 carries an N-linked (GlcNAc...) asparagine glycan. Disulfide bonds link Cys48–Cys91, Cys52–Cys95, and Cys134–Cys188. The Cell attachment site; atypical motif lies at 151–153 (RGE). Residues 179-181 (RGD) carry the Cell attachment site motif. Asn185, Asn204, Asn267, Asn311, Asn362, Asn388, Asn409, Asn456, and Asn469 each carry an N-linked (GlcNAc...) asparagine glycan. Positions 232–299 (GTQQKLFCSL…LRCVLELADQ (68 aa)) constitute an Ig-like C2-type 3 domain. A disulfide bond links Cys239 and Cys292. The Ig-like C2-type 4 domain maps to 327-381 (GSQVTVKCEAHSGSKVVLLSGVEPRPPTPQVQFTLNASSEDHKRSFFCSAALEVA). An intrachain disulfide couples Cys334 to Cys374. 3 disulfides stabilise this stretch: Cys406/Cys422, Cys422/Cys461, and Cys434/Cys461. One can recognise an Ig-like C2-type 5 domain in the interval 415 to 468 (GSQQTLKCQAWGNPSPKMTCRRKADGALLPIGVVKSVKQEMNGTYVCHAFSSHG). Residues 486-509 (WTIIILVPVLLVIVGLVMAASYVY) traverse the membrane as a helical segment. The Cytoplasmic portion of the chain corresponds to 510-537 (NRQRKIRIYKLQKAQEEAIKLKGQAPPP).

This sequence belongs to the immunoglobulin superfamily. ICAM family. Homodimer. Interacts with MUC1 and promotes cell aggregation in epithelial cells. Interacts with ARHGEF26/SGEF. Interacts (on T cell side) with CD81, CD247 and CD9 at immunological synapses between antigen-presenting cells and T cells. In terms of processing, monoubiquitinated, which is promoted by MARCH9 and leads to endocytosis. In terms of tissue distribution, expressed at low level on a subpopulation of lymphocytes, macrophages, and endothelial cells, but is strongly induced on these cells, and on fibroblasts and epithelial cells.

The protein localises to the membrane. Functionally, ICAM proteins are ligands for the leukocyte adhesion protein LFA-1 (integrin alpha-L/beta-2). During leukocyte trans-endothelial migration, ICAM1 engagement promotes the assembly of endothelial apical cups through ARHGEF26/SGEF and RHOG activation. This chain is Intercellular adhesion molecule 1 (Icam1), found in Mus musculus (Mouse).